Consider the following 322-residue polypeptide: Probable cAMP-dependent protein kinase catalytic subunit (322 aa).

The region spanning F7–F261 is the Protein kinase domain. ATP contacts are provided by residues V13–V21 and K37. D132 serves as the catalytic Proton acceptor. The AGC-kinase C-terminal domain maps to K262 to L322.

This sequence belongs to the protein kinase superfamily. AGC Ser/Thr protein kinase family. cAMP subfamily.

It carries out the reaction L-seryl-[protein] + ATP = O-phospho-L-seryl-[protein] + ADP + H(+). It catalyses the reaction L-threonyl-[protein] + ATP = O-phospho-L-threonyl-[protein] + ADP + H(+). The protein is Probable cAMP-dependent protein kinase catalytic subunit of Encephalitozoon cuniculi (strain GB-M1) (Microsporidian parasite).